The primary structure comprises 287 residues: Cyclopropane mycolic acid synthase MmaA2 (287 aa).

S-adenosyl-L-methionine contacts are provided by residues 33-34, 72-74, 94-99, 123-124, and Ile136; these read YS, GCG, TLSKNQ, and WE. Cys269 is a catalytic residue.

Belongs to the CFA/CMAS family.

It catalyses the reaction a 1-acyl-2-(9Z)-enoyl-sn-glycero-3-phospholipid + S-adenosyl-L-methionine = a 1-acyl-2-(9-cyclopronane)-acyl-sn-glycero-3-phospholipid + S-adenosyl-L-homocysteine + H(+). It functions in the pathway lipid metabolism; mycolic acid biosynthesis. Catalyzes the conversion of a double bond to a cis cyclopropane ring at the distal position of an alpha mycolic acid via the transfer of a methylene group from S-adenosyl-L-methionine. MmaA2 also catalyzes the biosynthesis of the cis-cyclopropanated methoxymycolates. Cyclopropanated mycolic acids are key factors participating in cell envelope permeability, host immunomodulation and persistence. In Mycobacterium tuberculosis (strain ATCC 25177 / H37Ra), this protein is Cyclopropane mycolic acid synthase MmaA2 (mmaA2).